The sequence spans 390 residues: LIM/homeobox protein Lhx4 (390 aa).

LIM zinc-binding domains lie at 28-87 and 88-150; these read PQCA…RFGT and KCTA…AKQN. Residues 157-216 constitute a DNA-binding region (homeobox); the sequence is AKRPRTTITAKQLETLKNAYKNSPKPARHVREQLSSETGLDMRVVQVWFQNRRAKEKRLK. An interaction with DNA region spans residues 161 to 181; the sequence is RTTITAKQLETLKNAYKNSPK. Residues 199–211 form an interaction with 5-mCpG DNA region; the sequence is RVVQVWFQNRRAK. 2 disordered regions span residues 231–253 and 355–390; these read VKRSRGGSKQEKESSAEDCGVSD and MAGGPTSDLSTGSSVGYPDFPTSPASWLDEMDHPPF.

In terms of tissue distribution, transient expression in ventrolateral regions of the developing neural tube and hindbrain.

It localises to the nucleus. Its function is as follows. May play a critical role in the development of respiratory control mechanisms and in the normal growth and maturation of the lung. Binds preferentially to methylated DNA. In Mus musculus (Mouse), this protein is LIM/homeobox protein Lhx4 (Lhx4).